We begin with the raw amino-acid sequence, 216 residues long: LexA repressor (216 aa).

Positions 28 to 48 form a DNA-binding region, H-T-H motif; the sequence is RAEIAAELGFSSANSAEEHLR. Catalysis depends on for autocatalytic cleavage activity residues S134 and K171.

It belongs to the peptidase S24 family. Homodimer.

The catalysed reaction is Hydrolysis of Ala-|-Gly bond in repressor LexA.. In terms of biological role, represses a number of genes involved in the response to DNA damage (SOS response), including recA and lexA. In the presence of single-stranded DNA, RecA interacts with LexA causing an autocatalytic cleavage which disrupts the DNA-binding part of LexA, leading to derepression of the SOS regulon and eventually DNA repair. The sequence is that of LexA repressor from Paraburkholderia xenovorans (strain LB400).